The following is a 122-amino-acid chain: Large ribosomal subunit protein uL14 (122 aa).

The protein belongs to the universal ribosomal protein uL14 family. In terms of assembly, part of the 50S ribosomal subunit. Forms a cluster with proteins L3 and L19. In the 70S ribosome, L14 and L19 interact and together make contacts with the 16S rRNA in bridges B5 and B8.

Its function is as follows. Binds to 23S rRNA. Forms part of two intersubunit bridges in the 70S ribosome. This is Large ribosomal subunit protein uL14 from Mesomycoplasma hyopneumoniae (strain 232) (Mycoplasma hyopneumoniae).